Consider the following 423-residue polypeptide: Serpin B12 (423 aa).

Residues 63–72 show a composition bias toward basic and acidic residues; that stretch reads LSKDEHKEPN. A disordered region spans residues 63–106; sequence LSKDEHKEPNDPSPQSESKASDSSLEGQKQTSASQDQQGESTND. Polar residues predominate over residues 75–106; the sequence is SPQSESKASDSSLEGQKQTSASQDQQGESTND.

It belongs to the serpin family. Ov-serpin subfamily. In terms of assembly, interacts with SLFN12; as part of a pathway regulating cell differentiation.

The protein localises to the cytoplasm. In terms of biological role, inhibits trypsin and plasmin, but not thrombin, coagulation factor Xa, or urokinase-type plasminogen activator. May play a role in cell differentiation. In Mus musculus (Mouse), this protein is Serpin B12 (Serpinb12).